A 195-amino-acid chain; its full sequence is Imidazoleglycerol-phosphate dehydratase (195 aa).

Belongs to the imidazoleglycerol-phosphate dehydratase family.

Its subcellular location is the cytoplasm. The enzyme catalyses D-erythro-1-(imidazol-4-yl)glycerol 3-phosphate = 3-(imidazol-4-yl)-2-oxopropyl phosphate + H2O. It functions in the pathway amino-acid biosynthesis; L-histidine biosynthesis; L-histidine from 5-phospho-alpha-D-ribose 1-diphosphate: step 6/9. This Sphingopyxis alaskensis (strain DSM 13593 / LMG 18877 / RB2256) (Sphingomonas alaskensis) protein is Imidazoleglycerol-phosphate dehydratase.